The chain runs to 366 residues: Zinc finger CCCH domain-containing protein 11 (366 aa).

A disordered region spans residues 43–66 (LHQAVQPKPDPTKTAAKKKKEEEK). Residues 54–79 (TKTAAKKKKEEEKAREKELNDLFKVA) are a coiled coil. 2 C3H1-type zinc fingers span residues 90-117 (DPKS…HDLN) and 160-198 (KPTD…HALP). Residues 208–234 (KALLEEESEKIAIEDEIEDQRKKVKTT) are a coiled coil. A disordered region spans residues 293–338 (YERQEESEANEEPSNKNQDEGPSSSTSNGKEVEESDDEDINIDDDL). Residues 312–321 (EGPSSSTSNG) are compositionally biased toward polar residues. A compositionally biased stretch (acidic residues) spans 325-338 (EESDDEDINIDDDL).

The chain is Zinc finger CCCH domain-containing protein 11 from Oryza sativa subsp. japonica (Rice).